Here is a 701-residue protein sequence, read N- to C-terminus: Ephexin-1 (701 aa).

Composition is skewed to basic and acidic residues over residues methionine 1–lysine 11 and glycine 26–arginine 48. Residues methionine 1 to aspartate 141 are disordered. The regulatory region; modulates activity toward RHOA, RAC1 and CDC42 stretch occupies residues methionine 1 to lysine 264. Polar residues predominate over residues alanine 120–threonine 132. A Phosphotyrosine modification is found at tyrosine 172. The disordered stretch occupies residues arginine 187 to alanine 226. Over residues aspartate 206–proline 218 the composition is skewed to acidic residues. Residues lysine 264–glycine 448 enclose the DH domain. A PH domain is found at tryptophan 480–arginine 592. The SH3 domain maps to leucine 603 to asparagine 664. Over residues histidine 679 to lysine 690 the composition is skewed to basic and acidic residues. The segment at histidine 679–glutamine 701 is disordered. The span at aspartate 691–glutamine 701 shows a compositional bias: basic residues.

In terms of assembly, interacts with CDK5R1 and EPHA4; activated by EPHA4 through the CDK5 kinase. In terms of processing, phosphorylation by CDK5 upon EPHA4 activation by EFNA1 may regulate dendritic spine morphogenesis. Src-dependent phosphorylation at Tyr-172 upon EPHA4 activation increases the guanine exchange factor activity toward RHOA. As to expression, expressed in telencephalic neurons (at protein level). Expressed in brain, spinal cord and testis.

Its subcellular location is the cytoplasm. It is found in the membrane. The protein localises to the cell projection. It localises to the growth cone. Acts as a guanine nucleotide exchange factor (GEF) which differentially activates the GTPases RHOA, RAC1 and CDC42. Plays a role in axon guidance regulating ephrin-induced growth cone collapse and dendritic spine morphogenesis. Upon activation by ephrin through EPHA4, the GEF activity switches toward RHOA resulting in its activation. Activated RHOA promotes cone retraction at the expense of RAC1- and CDC42-stimulated growth cone extension. This chain is Ephexin-1 (Ngef), found in Rattus norvegicus (Rat).